The sequence spans 659 residues: A-type ATP synthase subunit I (659 aa).

A run of 8 helical transmembrane segments spans residues 376–396, 415–435, 460–480, 489–509, 513–533, 542–562, 566–586, and 590–610; these read FFFG…VISA, IMLW…SYCG, VMAL…GFIV, AAIL…LFAL, LGIP…LFVV, MAVL…LSYA, ALAL…NMVW, and IGPI…GHIF.

It belongs to the V-ATPase 116 kDa subunit family. In terms of assembly, has multiple subunits with at least A(3), B(3), C, D, E, F, H, I and proteolipid K(x).

It localises to the cell membrane. Its function is as follows. Component of the A-type ATP synthase that produces ATP from ADP in the presence of a proton gradient across the membrane. In Pyrococcus abyssi (strain GE5 / Orsay), this protein is A-type ATP synthase subunit I.